We begin with the raw amino-acid sequence, 292 residues long: Large ribosomal subunit protein mL67 (292 aa).

The interval 59 to 83 (VELKSPSRLQLKSEPGNKGNPKGHG) is disordered.

The protein belongs to the mitochondrion-specific ribosomal protein mL67 family. As to quaternary structure, component of the mitochondrial large ribosomal subunit (mt-LSU). Mature N.crassa 74S mitochondrial ribosomes consist of a small (37S) and a large (54S) subunit. The 37S small subunit contains a 16S ribosomal RNA (16S mt-rRNA) and 32 different proteins. The 54S large subunit contains a 23S rRNA (23S mt-rRNA) and 42 different proteins.

Its subcellular location is the mitochondrion. In terms of biological role, component of the mitochondrial ribosome (mitoribosome), a dedicated translation machinery responsible for the synthesis of mitochondrial genome-encoded proteins, including at least some of the essential transmembrane subunits of the mitochondrial respiratory chain. The mitoribosomes are attached to the mitochondrial inner membrane and translation products are cotranslationally integrated into the membrane. mL67/MHR1 also has extraribosomal functions, being involved in regulation of mitochondrial DNA recombination, maintenance and repair, and generation of homoplasmic cells. mL67/MHR1 also acts as a transcription factor involved in regulation of RNA polymerase II-dependent transcription. The protein is Large ribosomal subunit protein mL67 (mhr1) of Neurospora crassa (strain ATCC 24698 / 74-OR23-1A / CBS 708.71 / DSM 1257 / FGSC 987).